We begin with the raw amino-acid sequence, 156 residues long: Anaerobic nitrite reductase HB2 (156 aa).

One can recognise a Globin domain in the interval 2–151 (GFTDKQEALV…LASAIKAEMH (150 aa)). The Homodimerization motif lies at 35-39 (EIAPV). Heme b is bound by residues Ser45, Lys59, His63, and His98. The short motif at 105–117 (DPHFEVVKEALLR) is the Homodimerization element.

The protein belongs to the plant globin family. In terms of assembly, homodimer. Heme b is required as a cofactor.

Its subcellular location is the cytoplasm. It localises to the nucleus. It catalyses the reaction Fe(III)-heme b-[protein] + nitric oxide + H2O = Fe(II)-heme b-[protein] + nitrite + 2 H(+). Phytoglobin that reduces nitrite to nitric oxide (NO) under anoxic conditions (e.g. during flooding or in waterlogged soil). May not function as an oxygen storage or transport protein. Has an unusually high affinity for O(2) through an hexacoordinate heme iron because of a very low dissociation constant. In Solanum lycopersicum (Tomato), this protein is Anaerobic nitrite reductase HB2.